The primary structure comprises 279 residues: MKTIMLCAISSLSAGNCSEDCHYCTQSAGTKADIKRYKLKSPEQVVDEAKKAYANHALGFCLVTSGARLDDQKTEQVACIARAVGKEVPQLMLIACNGMASYDQLKELKNAGVFSYNHNLETSRDFFPKICTTHSWDERWQTNLDAKATGLQLCCGGIYGIGESKTDRASFRTSLKELAPFSSPINFFIANPALKIKTPRLSVDEALKIVDDTVLALPNARIMIAGGREAVLGERQYEIFDHGVSAVVIGDYLTTKGEESCKDIAKFKQMGFEFASKCH.

Residues 2–228 (KTIMLCAISS…NARIMIAGGR (227 aa)) enclose the Radical SAM core domain. Positions 17, 21, and 24 each coordinate [4Fe-4S] cluster. Positions 61, 96, 154, and 221 each coordinate [2Fe-2S] cluster.

The protein belongs to the radical SAM superfamily. Biotin synthase family. In terms of assembly, homodimer. [4Fe-4S] cluster is required as a cofactor. It depends on [2Fe-2S] cluster as a cofactor.

The catalysed reaction is (4R,5S)-dethiobiotin + (sulfur carrier)-SH + 2 reduced [2Fe-2S]-[ferredoxin] + 2 S-adenosyl-L-methionine = (sulfur carrier)-H + biotin + 2 5'-deoxyadenosine + 2 L-methionine + 2 oxidized [2Fe-2S]-[ferredoxin]. The protein operates within cofactor biosynthesis; biotin biosynthesis; biotin from 7,8-diaminononanoate: step 2/2. In terms of biological role, catalyzes the conversion of dethiobiotin (DTB) to biotin by the insertion of a sulfur atom into dethiobiotin via a radical-based mechanism. This chain is Biotin synthase, found in Campylobacter curvus (strain 525.92).